A 346-amino-acid polypeptide reads, in one-letter code: Biotin synthase (346 aa).

The Radical SAM core domain occupies 38–256 (RQVQVSTLLS…IAVARIMMPT (219 aa)). [4Fe-4S] cluster is bound by residues Cys-53, Cys-57, and Cys-60. Positions 97, 128, 188, and 260 each coordinate [2Fe-2S] cluster.

The protein belongs to the radical SAM superfamily. Biotin synthase family. In terms of assembly, homodimer. [4Fe-4S] cluster is required as a cofactor. The cofactor is [2Fe-2S] cluster.

The enzyme catalyses (4R,5S)-dethiobiotin + (sulfur carrier)-SH + 2 reduced [2Fe-2S]-[ferredoxin] + 2 S-adenosyl-L-methionine = (sulfur carrier)-H + biotin + 2 5'-deoxyadenosine + 2 L-methionine + 2 oxidized [2Fe-2S]-[ferredoxin]. It participates in cofactor biosynthesis; biotin biosynthesis; biotin from 7,8-diaminononanoate: step 2/2. Its function is as follows. Catalyzes the conversion of dethiobiotin (DTB) to biotin by the insertion of a sulfur atom into dethiobiotin via a radical-based mechanism. This Escherichia coli O6:K15:H31 (strain 536 / UPEC) protein is Biotin synthase.